The following is a 552-amino-acid chain: Urocanate hydratase (552 aa).

NAD(+) contacts are provided by residues 49–50, Gln-127, 173–175, Asp-193, 239–240, 260–264, 270–271, and Tyr-319; these read GG, GMG, NA, QTSAH, and YI. Residue Cys-407 is part of the active site. Gly-489 contributes to the NAD(+) binding site.

The protein belongs to the urocanase family. It depends on NAD(+) as a cofactor.

The protein localises to the cytoplasm. The enzyme catalyses 4-imidazolone-5-propanoate = trans-urocanate + H2O. It participates in amino-acid degradation; L-histidine degradation into L-glutamate; N-formimidoyl-L-glutamate from L-histidine: step 2/3. Catalyzes the conversion of urocanate to 4-imidazolone-5-propionate. The polypeptide is Urocanate hydratase (Bacillus cereus (strain 03BB102)).